A 200-amino-acid polypeptide reads, in one-letter code: Small ribosomal subunit protein eS8A (200 aa).

Positions 1-31 (MGISRDSRHKRSATGAKRAQFRKKRKFELGR) are disordered. Thr-62 is subject to Phosphothreonine. Phosphoserine occurs at positions 66, 69, 73, and 86. Thr-107 carries the phosphothreonine modification. Phosphoserine is present on residues Ser-154, Ser-155, Ser-158, and Ser-161.

The protein belongs to the eukaryotic ribosomal protein eS8 family. Component of the small ribosomal subunit (SSU). Mature yeast ribosomes consist of a small (40S) and a large (60S) subunit. The 40S small subunit contains 1 molecule of ribosomal RNA (18S rRNA) and 33 different proteins (encoded by 57 genes). The large 60S subunit contains 3 rRNA molecules (25S, 5.8S and 5S rRNA) and 46 different proteins (encoded by 81 genes).

It localises to the cytoplasm. Component of the ribosome, a large ribonucleoprotein complex responsible for the synthesis of proteins in the cell. The small ribosomal subunit (SSU) binds messenger RNAs (mRNAs) and translates the encoded message by selecting cognate aminoacyl-transfer RNA (tRNA) molecules. The large subunit (LSU) contains the ribosomal catalytic site termed the peptidyl transferase center (PTC), which catalyzes the formation of peptide bonds, thereby polymerizing the amino acids delivered by tRNAs into a polypeptide chain. The nascent polypeptides leave the ribosome through a tunnel in the LSU and interact with protein factors that function in enzymatic processing, targeting, and the membrane insertion of nascent chains at the exit of the ribosomal tunnel. The chain is Small ribosomal subunit protein eS8A from Saccharomyces cerevisiae (strain ATCC 204508 / S288c) (Baker's yeast).